Reading from the N-terminus, the 170-residue chain is Shikimate kinase (170 aa).

11–16 (LSGKST) is a binding site for ATP. Residue S15 participates in Mg(2+) binding. Substrate-binding residues include D33, R57, and G79. R119 contacts ATP. R137 lines the substrate pocket.

The protein belongs to the shikimate kinase family. As to quaternary structure, monomer. It depends on Mg(2+) as a cofactor.

The protein localises to the cytoplasm. The enzyme catalyses shikimate + ATP = 3-phosphoshikimate + ADP + H(+). Its pathway is metabolic intermediate biosynthesis; chorismate biosynthesis; chorismate from D-erythrose 4-phosphate and phosphoenolpyruvate: step 5/7. Functionally, catalyzes the specific phosphorylation of the 3-hydroxyl group of shikimic acid using ATP as a cosubstrate. This is Shikimate kinase from Clostridium botulinum (strain Kyoto / Type A2).